The sequence spans 440 residues: Nuclear hormone receptor family member nhr-130 (440 aa).

The segment at residues 34-110 is a DNA-binding region (nuclear receptor); sequence LYTCQVCALP…VGMDPGRFQF (77 aa). NR C4-type zinc fingers lie at residues 37-57 and 74-93; these read CQVC…CRAC and CKKQ…CKKC. One can recognise an NR LBD domain in the interval 184 to 439; it reads EKPLIARNNL…FSHPEMFEDT (256 aa).

The protein belongs to the nuclear hormone receptor family.

It is found in the nucleus. Functionally, orphan nuclear receptor. This Caenorhabditis elegans protein is Nuclear hormone receptor family member nhr-130 (nhr-130).